A 96-amino-acid chain; its full sequence is Large ribosomal subunit protein eL21 (96 aa).

The disordered stretch occupies residues 1–22; the sequence is MRKSKGFKSRSRYKLKRSIRPK.

The protein belongs to the eukaryotic ribosomal protein eL21 family.

The protein is Large ribosomal subunit protein eL21 of Methanosphaera stadtmanae (strain ATCC 43021 / DSM 3091 / JCM 11832 / MCB-3).